A 238-amino-acid polypeptide reads, in one-letter code: Ubiquinone/menaquinone biosynthesis C-methyltransferase UbiE (238 aa).

Residues T62 and D82 each contribute to the S-adenosyl-L-methionine site.

It belongs to the class I-like SAM-binding methyltransferase superfamily. MenG/UbiE family.

The catalysed reaction is a 2-demethylmenaquinol + S-adenosyl-L-methionine = a menaquinol + S-adenosyl-L-homocysteine + H(+). The enzyme catalyses a 2-methoxy-6-(all-trans-polyprenyl)benzene-1,4-diol + S-adenosyl-L-methionine = a 5-methoxy-2-methyl-3-(all-trans-polyprenyl)benzene-1,4-diol + S-adenosyl-L-homocysteine + H(+). The protein operates within quinol/quinone metabolism; menaquinone biosynthesis; menaquinol from 1,4-dihydroxy-2-naphthoate: step 2/2. It functions in the pathway cofactor biosynthesis; ubiquinone biosynthesis. In terms of biological role, methyltransferase required for the conversion of demethylmenaquinol (DMKH2) to menaquinol (MKH2) and the conversion of 2-polyprenyl-6-methoxy-1,4-benzoquinol (DDMQH2) to 2-polyprenyl-3-methyl-6-methoxy-1,4-benzoquinol (DMQH2). The polypeptide is Ubiquinone/menaquinone biosynthesis C-methyltransferase UbiE (Wolbachia pipientis wMel).